The chain runs to 521 residues: Beta-glucosidase 11 (521 aa).

Residues 1–23 form the signal peptide; the sequence is MKLLSNSLMFLPLLALALTAVSS. Residues Gln45, His144, and 189 to 190 contribute to the a beta-D-glucoside site; that span reads NE. The active-site Proton donor is Glu190. Cys209 and Cys217 are disulfide-bonded. Residues Asn216 and Asn221 are each glycosylated (N-linked (GlcNAc...) asparagine). Tyr356 contacts a beta-D-glucoside. N-linked (GlcNAc...) asparagine glycans are attached at residues Asn364 and Asn388. Positions 422, 466, and 482 each coordinate a beta-D-glucoside. The Nucleophile role is filled by Glu422.

The protein belongs to the glycosyl hydrolase 1 family.

The enzyme catalyses Hydrolysis of terminal, non-reducing beta-D-glucosyl residues with release of beta-D-glucose.. This is Beta-glucosidase 11 from Arabidopsis thaliana (Mouse-ear cress).